The following is a 347-amino-acid chain: Farnesyl pyrophosphate synthase (347 aa).

Isopentenyl diphosphate-binding residues include Lys50, Arg53, and Gln88. The Mg(2+) site is built by Asp95 and Asp99. Position 104 (Arg104) interacts with dimethylallyl diphosphate. Residue Arg105 participates in isopentenyl diphosphate binding. Residues Lys192, Thr193, Gln232, Lys249, and Lys258 each contribute to the dimethylallyl diphosphate site.

Belongs to the FPP/GGPP synthase family. As to quaternary structure, interacts with spo9. Mg(2+) serves as cofactor.

Its subcellular location is the cytoplasm. It is found in the nucleus. The catalysed reaction is isopentenyl diphosphate + dimethylallyl diphosphate = (2E)-geranyl diphosphate + diphosphate. It carries out the reaction isopentenyl diphosphate + (2E)-geranyl diphosphate = (2E,6E)-farnesyl diphosphate + diphosphate. The protein operates within isoprenoid biosynthesis; farnesyl diphosphate biosynthesis; farnesyl diphosphate from geranyl diphosphate and isopentenyl diphosphate: step 1/1. Its pathway is isoprenoid biosynthesis; geranyl diphosphate biosynthesis; geranyl diphosphate from dimethylallyl diphosphate and isopentenyl diphosphate: step 1/1. Functionally, farnesyl pyrophosphate synthase; part of the second module of ergosterol biosynthesis pathway that includes the middle steps of the pathway. Fps1 catalyzes the sequential condensation of isopentenyl pyrophosphate with dimethylallyl pyrophosphate, and then with the resultant geranylpyrophosphate to the ultimate product farnesyl pyrophosphate. The second module is carried out in the vacuole and involves the formation of farnesyl diphosphate, which is also an important intermediate in the biosynthesis of ubiquinone, dolichol, heme and prenylated proteins. Activity by the mevalonate kinase erg12 first converts mevalonate into 5-phosphomevalonate. 5-phosphomevalonate is then further converted to 5-diphosphomevalonate by the phosphomevalonate kinase erg8. The diphosphomevalonate decarboxylase mvd1 then produces isopentenyl diphosphate. The isopentenyl-diphosphate delta-isomerase idi1 then catalyzes the 1,3-allylic rearrangement of the homoallylic substrate isopentenyl (IPP) to its highly electrophilic allylic isomer, dimethylallyl diphosphate (DMAPP). Finally the farnesyl diphosphate synthase fps1 catalyzes the sequential condensation of isopentenyl pyrophosphate with dimethylallyl pyrophosphate, and then with the resultant geranylpyrophosphate to the ultimate product farnesyl pyrophosphate. The chain is Farnesyl pyrophosphate synthase from Schizosaccharomyces pombe (strain 972 / ATCC 24843) (Fission yeast).